A 317-amino-acid polypeptide reads, in one-letter code: DNA-directed RNA polymerase subunit alpha (317 aa).

The interval 1–234 (MKQFVRPEFI…AHLEFFIDLN (234 aa)) is alpha N-terminal domain (alpha-NTD). The alpha C-terminal domain (alpha-CTD) stretch occupies residues 250 to 317 (DKELDRTVEE…ASLGLAFRQS (68 aa)).

Belongs to the RNA polymerase alpha chain family. As to quaternary structure, homodimer. The RNAP catalytic core consists of 2 alpha, 1 beta, 1 beta' and 1 omega subunit. When a sigma factor is associated with the core the holoenzyme is formed, which can initiate transcription.

The catalysed reaction is RNA(n) + a ribonucleoside 5'-triphosphate = RNA(n+1) + diphosphate. Its function is as follows. DNA-dependent RNA polymerase catalyzes the transcription of DNA into RNA using the four ribonucleoside triphosphates as substrates. The protein is DNA-directed RNA polymerase subunit alpha of Mycoplasma mycoides subsp. mycoides SC (strain CCUG 32753 / NCTC 10114 / PG1).